The chain runs to 760 residues: Xaa-Pro dipeptidyl-peptidase (760 aa).

Active-site charge relay system residues include serine 349, aspartate 469, and histidine 499.

This sequence belongs to the peptidase S15 family. Homodimer.

The protein resides in the cytoplasm. It catalyses the reaction Hydrolyzes Xaa-Pro-|- bonds to release unblocked, N-terminal dipeptides from substrates including Ala-Pro-|-p-nitroanilide and (sequentially) Tyr-Pro-|-Phe-Pro-|-Gly-Pro-|-Ile.. In terms of biological role, removes N-terminal dipeptides sequentially from polypeptides having unsubstituted N-termini provided that the penultimate residue is proline. The protein is Xaa-Pro dipeptidyl-peptidase of Streptococcus pyogenes serotype M5 (strain Manfredo).